A 400-amino-acid chain; its full sequence is Cytoplasmic polyadenylated homeobox-like protein 2 (400 aa).

The disordered stretch occupies residues 1-29; it reads MSSQAFPAEEDHHNEERQTKKKRKTKHRH. Residues 9-18 show a composition bias toward basic and acidic residues; that stretch reads EEDHHNEERQ. The segment covering 19 to 29 has biased composition (basic residues); sequence TKKKRKTKHRH. The homeobox DNA-binding region spans 24-83; it reads KTKHRHKFSEELLQELKEIFGENGYPDFTTRKTLANKFDCPVNVINNWFQNNRARLPPEE.

The protein localises to the nucleus. The polypeptide is Cytoplasmic polyadenylated homeobox-like protein 2 (Homo sapiens (Human)).